The chain runs to 596 residues: Elongation factor 4 (596 aa).

In terms of domain architecture, tr-type G spans 2 to 184 (KHIRNFSIIA…VIVAQIPPPE (183 aa)). GTP contacts are provided by residues 14 to 19 (DHGKST) and 131 to 134 (NKID).

The protein belongs to the TRAFAC class translation factor GTPase superfamily. Classic translation factor GTPase family. LepA subfamily.

Its subcellular location is the cell inner membrane. The enzyme catalyses GTP + H2O = GDP + phosphate + H(+). Functionally, required for accurate and efficient protein synthesis under certain stress conditions. May act as a fidelity factor of the translation reaction, by catalyzing a one-codon backward translocation of tRNAs on improperly translocated ribosomes. Back-translocation proceeds from a post-translocation (POST) complex to a pre-translocation (PRE) complex, thus giving elongation factor G a second chance to translocate the tRNAs correctly. Binds to ribosomes in a GTP-dependent manner. The sequence is that of Elongation factor 4 from Shewanella woodyi (strain ATCC 51908 / MS32).